The primary structure comprises 242 residues: 3-oxoacyl-[acyl-carrier-protein] reductase FabG (242 aa).

Residues 10–13 (GSTR), T35, 57–58 (NV), and N84 each bind NADP(+). S136 contacts substrate. Y149 (proton acceptor) is an active-site residue. NADP(+) is bound by residues 149-153 (YCAAK) and I182.

The protein belongs to the short-chain dehydrogenases/reductases (SDR) family. As to quaternary structure, homotetramer.

The enzyme catalyses a (3R)-hydroxyacyl-[ACP] + NADP(+) = a 3-oxoacyl-[ACP] + NADPH + H(+). It functions in the pathway lipid metabolism; fatty acid biosynthesis. In terms of biological role, catalyzes the NADPH-dependent reduction of beta-ketoacyl-ACP substrates to beta-hydroxyacyl-ACP products, the first reductive step in the elongation cycle of fatty acid biosynthesis. This Haemophilus influenzae (strain ATCC 51907 / DSM 11121 / KW20 / Rd) protein is 3-oxoacyl-[acyl-carrier-protein] reductase FabG (fabG).